Here is a 212-residue protein sequence, read N- to C-terminus: MSTGKFIVIEGMEGAGKSSAIAVIESTLNKHGIEYINTREPGGTPLAESLRDMVKSVDHQEKLTVETELLLMYASRSQLLANKILPALAAGKWVIGDRHDLSSRAYQGGGRGFDETIMNTISDITLKGFRPDITLYLDIDPHIGLSRAKARGDLDRIELEKMEFFIRVHNKYRELAEQDDSIITVDAAQAMLKVHQDVEKAVIGFITNTDKG.

Residue 11–18 (GMEGAGKS) coordinates ATP.

The protein belongs to the thymidylate kinase family.

The catalysed reaction is dTMP + ATP = dTDP + ADP. Functionally, phosphorylation of dTMP to form dTDP in both de novo and salvage pathways of dTTP synthesis. This is Thymidylate kinase from Colwellia psychrerythraea (strain 34H / ATCC BAA-681) (Vibrio psychroerythus).